Reading from the N-terminus, the 139-residue chain is Putative pre-16S rRNA nuclease (139 aa).

The protein belongs to the YqgF nuclease family.

The protein resides in the cytoplasm. Functionally, could be a nuclease involved in processing of the 5'-end of pre-16S rRNA. This chain is Putative pre-16S rRNA nuclease, found in Legionella pneumophila (strain Lens).